A 361-amino-acid chain; its full sequence is tRNA-specific 2-thiouridylase MnmA (361 aa).

Residues 11–18 (GMSGGVDS) and M37 each bind ATP. C106 serves as the catalytic Nucleophile. C106 and C202 are joined by a disulfide. G130 provides a ligand contact to ATP. An interaction with tRNA region spans residues 152 to 154 (KDQ). The Cysteine persulfide intermediate role is filled by C202. The segment at 308-309 (RY) is interaction with tRNA.

This sequence belongs to the MnmA/TRMU family.

Its subcellular location is the cytoplasm. The catalysed reaction is S-sulfanyl-L-cysteinyl-[protein] + uridine(34) in tRNA + AH2 + ATP = 2-thiouridine(34) in tRNA + L-cysteinyl-[protein] + A + AMP + diphosphate + H(+). In terms of biological role, catalyzes the 2-thiolation of uridine at the wobble position (U34) of tRNA, leading to the formation of s(2)U34. In Clostridium botulinum (strain Alaska E43 / Type E3), this protein is tRNA-specific 2-thiouridylase MnmA.